Consider the following 342-residue polypeptide: Methylthioribose-1-phosphate isomerase (342 aa).

Substrate contacts are provided by residues 49 to 51 (RGA), R86, and Q187. D228 serves as the catalytic Proton donor. Residue 238–239 (NK) participates in substrate binding.

This sequence belongs to the eIF-2B alpha/beta/delta subunits family. MtnA subfamily.

The enzyme catalyses 5-(methylsulfanyl)-alpha-D-ribose 1-phosphate = 5-(methylsulfanyl)-D-ribulose 1-phosphate. Its pathway is amino-acid biosynthesis; L-methionine biosynthesis via salvage pathway; L-methionine from S-methyl-5-thio-alpha-D-ribose 1-phosphate: step 1/6. Its function is as follows. Catalyzes the interconversion of methylthioribose-1-phosphate (MTR-1-P) into methylthioribulose-1-phosphate (MTRu-1-P). This Klebsiella pneumoniae (strain 342) protein is Methylthioribose-1-phosphate isomerase.